The chain runs to 764 residues: Thyrotropin receptor (764 aa).

Residues 1–21 (MRPGSLLLLVLLLALSRSLRG) form the signal peptide. Residues 22–413 (KECASPPCEC…EFNPCEDIMG (392 aa)) are Extracellular-facing. Cys-31 and Cys-41 form a disulfide bridge. 2 N-linked (GlcNAc...) asparagine glycosylation sites follow: Asn-77 and Asn-99. LRR repeat units lie at residues 100-124 (LSKM…ALTE), 125-150 (LPLL…IYST), 151-174 (DIFF…AFQG), 176-199 (CNET…AFNG), 200-223 (TKLD…AFGG), 225-248 (YSGP…GLEH), and 264-288 (PLSL…AFKN). N-linked (GlcNAc...) asparagine glycans are attached at residues Asn-177 and Asn-198. The N-linked (GlcNAc...) asparagine glycan is linked to Asn-302. Tyr-385 is subject to Sulfotyrosine. A helical transmembrane segment spans residues 414–441 (YRFLRIVVWFVSLLALLGNIFVLLILLT). The Cytoplasmic segment spans residues 442–450 (SHYKLTVPR). Residues 451–473 (FLMCNLAFADFCMGVYLLLIASV) form a helical membrane-spanning segment. Topologically, residues 474-494 (DLYTHSEYYNHAIDWQTGPGC) are extracellular. Cys-494 and Cys-569 are disulfide-bonded. Residues 495 to 517 (NTAGFFTVFASELSVYTLTVITL) traverse the membrane as a helical segment. Over 518-537 (ERWYAITFAMRLDRKIRLRH) the chain is Cytoplasmic. The chain crosses the membrane as a helical span at residues 538-560 (AYTIMAGGWVSCFLLALLPMVGI). Residues 561–580 (SSYAKVSICLPMDTDTPLAL) lie on the Extracellular side of the membrane. Residues 581-602 (AYIVLVLLLNVVAFVVVCSCYV) form a helical membrane-spanning segment. Residues 603 to 625 (KIYITVRNPQYNPRDKDTKIAKR) lie on the Cytoplasmic side of the membrane. A helical membrane pass occupies residues 626-649 (MAVLIFTDFMCMAPISFYALSALM). The Extracellular segment spans residues 650-660 (NKPLITVTNSK). A helical transmembrane segment spans residues 661 to 682 (ILLVLFYPLNSCANPFLYAIFT). Residues 683 to 764 (KAFQRDVFIL…ISEEYKQTAL (82 aa)) are Cytoplasmic-facing. The PDZ-binding motif lies at 762–764 (TAL).

This sequence belongs to the G-protein coupled receptor 1 family. FSH/LSH/TSH subfamily. In terms of assembly, interacts with heterodimer GPHA2:GPHB5; this interaction stimulates cAMP production. Interacts (via the PDZ-binding motif) with SCRIB; regulates TSHR trafficking and function. Post-translationally, glycosylated. In terms of processing, sulfated. Sulfation on Tyr-385 plays a role in thyrotropin receptor binding and activation.

The protein localises to the cell membrane. Its subcellular location is the basolateral cell membrane. Its function is as follows. Receptor for the thyroid-stimulating hormone (TSH) or thyrotropin. Also acts as a receptor for the heterodimeric glycoprotein hormone (GPHA2:GPHB5) or thyrostimulin. The activity of this receptor is mediated by G proteins which activate adenylate cyclase. Plays a central role in controlling thyroid cell metabolism. The polypeptide is Thyrotropin receptor (Tshr) (Mus musculus (Mouse)).